Reading from the N-terminus, the 428-residue chain is Gamma-glutamyl phosphate reductase (428 aa).

It belongs to the gamma-glutamyl phosphate reductase family.

Its subcellular location is the cytoplasm. The catalysed reaction is L-glutamate 5-semialdehyde + phosphate + NADP(+) = L-glutamyl 5-phosphate + NADPH + H(+). The protein operates within amino-acid biosynthesis; L-proline biosynthesis; L-glutamate 5-semialdehyde from L-glutamate: step 2/2. Its function is as follows. Catalyzes the NADPH-dependent reduction of L-glutamate 5-phosphate into L-glutamate 5-semialdehyde and phosphate. The product spontaneously undergoes cyclization to form 1-pyrroline-5-carboxylate. This Treponema pallidum (strain Nichols) protein is Gamma-glutamyl phosphate reductase.